The sequence spans 184 residues: MSCRSEHIWIEPITGARKTSNFCWAVILFLGSLGFLLVGTSSYLGRNLISLFPSQEIVFFPQGIVMSFYGIAGLFISSYLWCTISWNVGSGYDRFDRKDGIVCIFRWGFPGKNRRVFLQFLIKDIQSVRIEVKEGIYARRVLYMDIRGQGAIPLTRTDENFTPREMEQKAAELAYFLRVPIEVF.

Transmembrane regions (helical) follow at residues 22-42 and 57-77; these read FCWA…GTSS and IVFF…LFIS.

The protein belongs to the Ycf4 family.

It localises to the plastid. It is found in the chloroplast thylakoid membrane. Functionally, seems to be required for the assembly of the photosystem I complex. This chain is Photosystem I assembly protein Ycf4, found in Lactuca sativa (Garden lettuce).